The following is a 449-amino-acid chain: Trigger factor (449 aa).

A PPIase FKBP-type domain is found at 173-258; it reads GDRVTLDFVG…LKKVEWAHLP (86 aa).

Belongs to the FKBP-type PPIase family. Tig subfamily.

It is found in the cytoplasm. The catalysed reaction is [protein]-peptidylproline (omega=180) = [protein]-peptidylproline (omega=0). In terms of biological role, involved in protein export. Acts as a chaperone by maintaining the newly synthesized protein in an open conformation. Functions as a peptidyl-prolyl cis-trans isomerase. In Cupriavidus metallidurans (strain ATCC 43123 / DSM 2839 / NBRC 102507 / CH34) (Ralstonia metallidurans), this protein is Trigger factor.